We begin with the raw amino-acid sequence, 332 residues long: Flotillin-like protein FloA (332 aa).

The chain crosses the membrane as a helical span at residues 9 to 29 (FILIGGGIIFVVLFFHYVPFF).

It belongs to the flotillin-like FloA family. As to quaternary structure, homooligomerizes.

It is found in the cell membrane. Its subcellular location is the membrane raft. Functionally, found in functional membrane microdomains (FMM) that may be equivalent to eukaryotic membrane rafts. FMMs are highly dynamic and increase in number as cells age. Flotillins are thought to be important factors in membrane fluidity. This is Flotillin-like protein FloA from Phocaeicola vulgatus (strain ATCC 8482 / DSM 1447 / JCM 5826 / CCUG 4940 / NBRC 14291 / NCTC 11154) (Bacteroides vulgatus).